A 251-amino-acid polypeptide reads, in one-letter code: MLTFLSNLNNMIIMNDVPTPYGVYFQDSATPNQEGILELHDNIMFYLLVILGLVSWLLFTITRTYSKNPIAYKYIKHGQTIEIIWTIFPAVVLLIIAFPSFILLYLCDEVISPAMTIKAIGLQWYWKYEYSDFINESGETVEFESYVIPEDLLEDGQLRLLDTDTSVVVPVDTHIRFVVTAADVIHDFAIPSLGIKVDATPGRLNQVSALIQREGVFYGQCSELCGTAHSAMPIKIEAVSLPSFLEWLNEQ.

Residues 1–15 form the signal peptide; that stretch reads MLTFLSNLNNMIIMN. At 16-42 the chain is on the mitochondrial intermembrane side; it reads DVPTPYGVYFQDSATPNQEGILELHDN. The chain crosses the membrane as a helical span at residues 43–64; the sequence is IMFYLLVILGLVSWLLFTITRT. The Mitochondrial matrix portion of the chain corresponds to 65-82; that stretch reads YSKNPIAYKYIKHGQTIE. The helical transmembrane segment at 83 to 107 threads the bilayer; that stretch reads IIWTIFPAVVLLIIAFPSFILLYLC. Over 108–251 the chain is Mitochondrial intermembrane; that stretch reads DEVISPAMTI…PSFLEWLNEQ (144 aa). Cu cation-binding residues include H186, C221, E223, C225, H229, and M232. E223 lines the Mg(2+) pocket.

The protein belongs to the cytochrome c oxidase subunit 2 family. In terms of assembly, component of the cytochrome c oxidase (complex IV, CIV), a multisubunit enzyme composed of a catalytic core of 3 subunits and several supernumerary subunits. The complex exists as a monomer or a dimer and forms supercomplexes (SCs) in the inner mitochondrial membrane with ubiquinol-cytochrome c oxidoreductase (cytochrome b-c1 complex, complex III, CIII). Requires Cu cation as cofactor. Post-translationally, the signal sequence of COX2 is processed by IMP1.

It localises to the mitochondrion inner membrane. The enzyme catalyses 4 Fe(II)-[cytochrome c] + O2 + 8 H(+)(in) = 4 Fe(III)-[cytochrome c] + 2 H2O + 4 H(+)(out). In terms of biological role, component of the cytochrome c oxidase, the last enzyme in the mitochondrial electron transport chain which drives oxidative phosphorylation. The respiratory chain contains 3 multisubunit complexes succinate dehydrogenase (complex II, CII), ubiquinol-cytochrome c oxidoreductase (cytochrome b-c1 complex, complex III, CIII) and cytochrome c oxidase (complex IV, CIV), that cooperate to transfer electrons derived from NADH and succinate to molecular oxygen, creating an electrochemical gradient over the inner membrane that drives transmembrane transport and the ATP synthase. Cytochrome c oxidase is the component of the respiratory chain that catalyzes the reduction of oxygen to water. Electrons originating from reduced cytochrome c in the intermembrane space (IMS) are transferred via the dinuclear copper A center (CU(A)) of subunit 2 and heme A of subunit 1 to the active site in subunit 1, a binuclear center (BNC) formed by heme A3 and copper B (CU(B)). The BNC reduces molecular oxygen to 2 water molecules using 4 electrons from cytochrome c in the IMS and 4 protons from the mitochondrial matrix. In Lachancea kluyveri (strain ATCC 58438 / CBS 3082 / BCRC 21498 / NBRC 1685 / JCM 7257 / NCYC 543 / NRRL Y-12651) (Yeast), this protein is Cytochrome c oxidase subunit 2 (COX2).